We begin with the raw amino-acid sequence, 1578 residues long: Chitinase ChiA (1578 aa).

The signal sequence occupies residues 1–19 (MKHYYRLLFLLLFPLLASA). In terms of domain architecture, GH18 1 spans 25 to 466 (KKVVGYYAQW…NQVDTSFGSV (442 aa)). Positions 26–446 (KVVGYYAQWS…GGMIWELSQD (421 aa)) are GH18N. Chitin is bound by residues 92–93 (DA) and 119–122 (GGWT). The Proton donor role is filled by E162. Chitin-binding positions include Y163, 249–252 (FGYD), and W441. One can recognise a CNA-B domain in the interval 485–536 (TDVTVELRNASNAVIQTVVSANGNFAFNNLTSGQNYSLTALKATYTFTPVTL). The GH18C stretch occupies residues 1142–1462 (KIILGYAHSW…GLMTWSVNWD (321 aa)). Residues 1142–1483 (KIILGYAHSW…KAYAAYFASQ (342 aa)) form the GH18 2 domain. The active-site Proton donor is E1264. Residues 1473–1578 (SKAYAAYFAS…KSFKVMNFLN (106 aa)) are CTD.

It belongs to the glycosyl hydrolase 18 family. Chitinase class II subfamily.

The protein resides in the secreted. The catalysed reaction is Random endo-hydrolysis of N-acetyl-beta-D-glucosaminide (1-&gt;4)-beta-linkages in chitin and chitodextrins.. Its function is as follows. Major extracellular chitinase, which is essential for chitin utilization. The chain is Chitinase ChiA (chiA) from Flavobacterium johnsoniae (strain ATCC 17061 / DSM 2064 / JCM 8514 / BCRC 14874 / CCUG 350202 / NBRC 14942 / NCIMB 11054 / UW101) (Cytophaga johnsonae).